Consider the following 266-residue polypeptide: Large ribosomal subunit protein eL8 (266 aa).

The segment covering 1–11 (MPKGKKAKGKK) has biased composition (basic residues). Residues 1–21 (MPKGKKAKGKKVAPAPSVAKK) form a disordered region.

It belongs to the eukaryotic ribosomal protein eL8 family. In terms of assembly, component of the large ribosomal subunit.

It localises to the cytoplasm. Functionally, component of the large ribosomal subunit. The ribosome is a large ribonucleoprotein complex responsible for the synthesis of proteins in the cell. This is Large ribosomal subunit protein eL8 (rpl7a) from Ictalurus punctatus (Channel catfish).